We begin with the raw amino-acid sequence, 498 residues long: ATP synthase subunit beta, chloroplastic (498 aa).

Residue Thr-6 is modified to Phosphothreonine. Ser-13 is modified (phosphoserine). 172–179 (GGAGVGKT) contacts ATP.

The protein belongs to the ATPase alpha/beta chains family. F-type ATPases have 2 components, CF(1) - the catalytic core - and CF(0) - the membrane proton channel. CF(1) has five subunits: alpha(3), beta(3), gamma(1), delta(1), epsilon(1). CF(0) has four main subunits: a(1), b(1), b'(1) and c(9-12).

Its subcellular location is the plastid. The protein resides in the chloroplast thylakoid membrane. It catalyses the reaction ATP + H2O + 4 H(+)(in) = ADP + phosphate + 5 H(+)(out). Functionally, produces ATP from ADP in the presence of a proton gradient across the membrane. The catalytic sites are hosted primarily by the beta subunits. The polypeptide is ATP synthase subunit beta, chloroplastic (Crucihimalaya wallichii (Rock-cress)).